The chain runs to 192 residues: dTTP/UTP pyrophosphatase (192 aa).

Aspartate 70 (proton acceptor) is an active-site residue.

It belongs to the Maf family. YhdE subfamily. A divalent metal cation is required as a cofactor.

Its subcellular location is the cytoplasm. It catalyses the reaction dTTP + H2O = dTMP + diphosphate + H(+). The catalysed reaction is UTP + H2O = UMP + diphosphate + H(+). In terms of biological role, nucleoside triphosphate pyrophosphatase that hydrolyzes dTTP and UTP. May have a dual role in cell division arrest and in preventing the incorporation of modified nucleotides into cellular nucleic acids. In Clostridium perfringens (strain ATCC 13124 / DSM 756 / JCM 1290 / NCIMB 6125 / NCTC 8237 / Type A), this protein is dTTP/UTP pyrophosphatase.